A 283-amino-acid polypeptide reads, in one-letter code: MPHRKERPSGSSLHTHGSTGTAEGGNMSRLSLTRSPVSPLAAQGIPLPAQLTKSNAPVHIDVGGHMYTSSLATLTKYPDSRISRLFNGTEPIVLDSLKQHYFIDRDGEIFRYVLSFLRTSKLLLPDDFKDFSLLYEEARYYQLQPMVRELERWQQEQEQRRRSRACDCLVVRVTPDLGERIALSGEKALIEEVFPETGDVMCNSVNAGWNQDPTHVIRFPLNGYCRLNSVQVLERLFQRGFSVAASCGGGVDSSQFSEYVLCREERRPQPTPTAVRIKQEPLD.

The disordered stretch occupies residues 1-32 (MPHRKERPSGSSLHTHGSTGTAEGGNMSRLSL). Residues 9 to 21 (SGSSLHTHGSTGT) show a composition bias toward low complexity. Ser-31, Ser-35, and Ser-38 each carry phosphoserine. In terms of domain architecture, BTB spans 56–126 (APVHIDVGGH…LRTSKLLLPD (71 aa)).

In terms of assembly, forms oligomers, predominantly homopentamers. Interacts with KCTD1, probably forming heteropentamers depending on its abundance in a cell-type dependent manner. Interacts with TFAP2A; this interaction inhibits TFAP2A transcriptional activation.

The protein resides in the nucleus. Functionally, during embryonic development, it is involved in neural crest formation. Inhibits AP2 transcriptional activity by interaction with its activation domain. This is BTB/POZ domain-containing protein KCTD15 (KCTD15) from Homo sapiens (Human).